Consider the following 1108-residue polypeptide: Retinal guanylyl cyclase 1 (1108 aa).

An N-terminal signal peptide occupies residues 1-54 (MSAWLLPAGGLPGAGFCVPARQSPSSFSRVLRWPRPGLPGLLLLLLLPSPSALS). Residues 55 to 465 (AVFKVGVLGP…PDVICNGGVE (411 aa)) are Extracellular-facing. The cysteines at positions 108 and 136 are disulfide-linked. Residue N300 is glycosylated (N-linked (GlcNAc...) asparagine). A helical transmembrane segment spans residues 466–490 (PGLVFVGFLLVIGMGLTGAFLAHYL). A Protein kinase domain is found at 491-811 (RHRLLHMQMA…DLTFDLFKSI (321 aa)). Topologically, residues 491–1108 (RHRLLHMQMA…KARPGQFTGK (618 aa)) are cytoplasmic. The 131-residue stretch at 883–1013 (TLYFSDIVGF…DTVNTASRME (131 aa)) folds into the Guanylate cyclase domain. The tract at residues 1069–1108 (IPKPPDLQPGASNHGISLQEIPPERRKKLEKARPGQFTGK) is disordered.

It belongs to the adenylyl cyclase class-4/guanylyl cyclase family. Homodimer; requires homodimerization for guanylyl cyclase activity. Interacts (via C-terminus) with RD3 (via C-terminus); promotes the exit of GUCY2E from the endoplasmic reticulum and its trafficking to the photoreceptor outer segments. Interaction with RD3 negatively regulates GUCY2E guanylate cyclase activity. Post-translationally, there are 9 conserved cysteine residues in sensory guanylate cyclases, 6 in the extracellular domain, which may be involved in intra- or interchain disulfide bonds.

Its subcellular location is the photoreceptor outer segment membrane. It localises to the endoplasmic reticulum membrane. The catalysed reaction is GTP = 3',5'-cyclic GMP + diphosphate. With respect to regulation, activated by GUCA1A when free calcium ions concentration is low, and inhibited by GUCA1A when free calcium ions concentration is high. Negatively regulated by RD3; RD3 inhibits the basal and GUCA1A-stimulated guanylate cyclase activity. In terms of biological role, catalyzes the synthesis of cyclic GMP (cGMP) in rods and cones of photoreceptors. Plays an essential role in phototransduction, by mediating cGMP replenishment. May also participate in the trafficking of membrane-asociated proteins to the photoreceptor outer segment membrane. The sequence is that of Retinal guanylyl cyclase 1 (Gucy2e) from Mus musculus (Mouse).